Consider the following 106-residue polypeptide: MNDSEFHRLADALWLTIEERLDSWDGDSDIDCEINGGVLTLSFENGSKIIINRQEPLHQVWLATKQGGYHFDLKGDEWICDRSGETFWDLLGQAATQQAGEKVSFR.

Belongs to the frataxin family.

Its function is as follows. Involved in iron-sulfur (Fe-S) cluster assembly. May act as a regulator of Fe-S biogenesis. The polypeptide is Iron-sulfur cluster assembly protein CyaY (Salmonella schwarzengrund (strain CVM19633)).